We begin with the raw amino-acid sequence, 115 residues long: Class I hydrophobin 21 (115 aa).

The N-terminal stretch at 1 to 20 (MFAAPATMLVLAALAALSSA) is a signal peptide. 4 disulfide bridges follow: C30–C93, C37–C87, C38–C77, and C94–C107.

It belongs to the fungal hydrophobin family. In terms of assembly, self-assembles to form functional amyloid fibrils called rodlets. Self-assembly into fibrillar rodlets occurs spontaneously at hydrophobic:hydrophilic interfaces and the rodlets further associate laterally to form amphipathic monolayers.

Its subcellular location is the secreted. The protein resides in the cell wall. Functionally, aerial growth, conidiation, and dispersal of filamentous fungi in the environment rely upon a capability of their secreting small amphipathic proteins called hydrophobins (HPBs) with low sequence identity. Class I can self-assemble into an outermost layer of rodlet bundles on aerial cell surfaces, conferring cellular hydrophobicity that supports fungal growth, development and dispersal; whereas Class II form highly ordered films at water-air interfaces through intermolecular interactions but contribute nothing to the rodlet structure. The sequence is that of Class I hydrophobin 21 from Pleurotus ostreatus (strain PC15) (Oyster mushroom).